We begin with the raw amino-acid sequence, 664 residues long: 1,4-alpha-glucan branching enzyme GlgB 2 (664 aa).

Residues 1-17 (MGGKEMRNCKELKHEKN) show a composition bias toward basic and acidic residues. A disordered region spans residues 1 to 31 (MGGKEMRNCKELKHEKNGNVTEKVGKNKGKS). Residue Asp-342 is the Nucleophile of the active site. Residue Glu-395 is the Proton donor of the active site.

It belongs to the glycosyl hydrolase 13 family. GlgB subfamily. In terms of assembly, monomer.

It catalyses the reaction Transfers a segment of a (1-&gt;4)-alpha-D-glucan chain to a primary hydroxy group in a similar glucan chain.. The protein operates within glycan biosynthesis; glycogen biosynthesis. In terms of biological role, catalyzes the formation of the alpha-1,6-glucosidic linkages in glycogen by scission of a 1,4-alpha-linked oligosaccharide from growing alpha-1,4-glucan chains and the subsequent attachment of the oligosaccharide to the alpha-1,6 position. The polypeptide is 1,4-alpha-glucan branching enzyme GlgB 2 (glgB2) (Clostridium perfringens (strain 13 / Type A)).